We begin with the raw amino-acid sequence, 269 residues long: 3-deoxy-manno-octulosonate cytidylyltransferase (269 aa).

The protein belongs to the KdsB family.

It localises to the cytoplasm. The catalysed reaction is 3-deoxy-alpha-D-manno-oct-2-ulosonate + CTP = CMP-3-deoxy-beta-D-manno-octulosonate + diphosphate. It participates in nucleotide-sugar biosynthesis; CMP-3-deoxy-D-manno-octulosonate biosynthesis; CMP-3-deoxy-D-manno-octulosonate from 3-deoxy-D-manno-octulosonate and CTP: step 1/1. Its pathway is bacterial outer membrane biogenesis; lipopolysaccharide biosynthesis. Functionally, activates KDO (a required 8-carbon sugar) for incorporation into bacterial lipopolysaccharide in Gram-negative bacteria. This Cupriavidus necator (strain ATCC 17699 / DSM 428 / KCTC 22496 / NCIMB 10442 / H16 / Stanier 337) (Ralstonia eutropha) protein is 3-deoxy-manno-octulosonate cytidylyltransferase.